A 524-amino-acid chain; its full sequence is Translation initiation factor eIF2B subunit delta (524 aa).

The segment at 1-155 (MAAVAVAVRE…EHTPADDPTL (155 aa)) is disordered. Alanine 2 bears the N-acetylalanine mark. Basic and acidic residues-rich tracts occupy residues 8–20 (VREE…KTEL) and 31–40 (LTQEEKLQLR). The residue at position 12 (serine 12) is a Phosphoserine. The span at 41–51 (KEKKQQKKKRK) shows a compositional bias: basic residues. Threonine 86 carries the phosphothreonine modification. Over residues 96–121 (SKAELRAERRAKQEAERALKQARKGE) the composition is skewed to basic and acidic residues. Positions 130-140 (CPSTAGETTSG) are enriched in polar residues. The may bind the chemical integrated stress response (ISR) inhibitor ISRIB stretch occupies residues 171-180 (RKDYGSKVSL).

It belongs to the eIF-2B alpha/beta/delta subunits family. As to quaternary structure, component of the translation initiation factor 2B (eIF2B) complex which is a heterodecamer of two sets of five different subunits: alpha, beta, gamma, delta and epsilon. Subunits alpha, beta and delta comprise a regulatory subcomplex and subunits epsilon and gamma comprise a catalytic subcomplex. Within the complex, the hexameric regulatory complex resides at the center, with the two heterodimeric catalytic subcomplexes bound on opposite sides.

Its subcellular location is the cytoplasm. The protein resides in the cytosol. Its activity is regulated as follows. Activated by the chemical integrated stress response (ISR) inhibitor ISRIB which stimulates guanine nucleotide exchange factor activity for both phosphorylated and unphosphorylated eIF2. Acts as a component of the translation initiation factor 2B (eIF2B) complex, which catalyzes the exchange of GDP for GTP on eukaryotic initiation factor 2 (eIF2) gamma subunit. Its guanine nucleotide exchange factor activity is repressed when bound to eIF2 complex phosphorylated on the alpha subunit, thereby limiting the amount of methionyl-initiator methionine tRNA available to the ribosome and consequently global translation is repressed. The sequence is that of Translation initiation factor eIF2B subunit delta (Eif2b4) from Mus musculus (Mouse).